Here is a 442-residue protein sequence, read N- to C-terminus: Radical S-adenosyl methionine domain-containing protein 1, mitochondrial (442 aa).

The transit peptide at 1–17 (MVPSGVRTGRWVAAARA) directs the protein to the mitochondrion. The region spanning 34-270 (ESASTRAALY…RTVLRDAGFR (237 aa)) is the Radical SAM core domain. Tyrosine 43 is a binding site for S-adenosyl-L-methionine. Residues cysteine 49, cysteine 53, and cysteine 56 each coordinate [4Fe-4S] cluster. Residues glycine 98, 99 to 100 (GT), glutamate 131, glutamine 158, arginine 170, and aspartate 195 contribute to the S-adenosyl-L-methionine site.

This sequence belongs to the anaerobic coproporphyrinogen-III oxidase family. HemW subfamily. The cofactor is [4Fe-4S] cluster.

It is found in the mitochondrion. Functionally, may be a heme chaperone, appears to bind heme. Homologous bacterial proteins do not have oxygen-independent coproporphyrinogen-III oxidase activity. Binds 1 [4Fe-4S] cluster. The cluster is coordinated with 3 cysteines and an exchangeable S-adenosyl-L-methionine. In Mus musculus (Mouse), this protein is Radical S-adenosyl methionine domain-containing protein 1, mitochondrial (Rsad1).